We begin with the raw amino-acid sequence, 146 residues long: NADH-quinone oxidoreductase subunit A (146 aa).

3 helical membrane passes run 14 to 34 (FGLF…GGFL), 68 to 88 (LVAM…AWAV), and 96 to 116 (IGFI…IYLV).

Belongs to the complex I subunit 3 family. As to quaternary structure, NDH-1 is composed of 13 different subunits. Subunits NuoA, H, J, K, L, M, N constitute the membrane sector of the complex.

It is found in the cell inner membrane. It catalyses the reaction a quinone + NADH + 5 H(+)(in) = a quinol + NAD(+) + 4 H(+)(out). Its function is as follows. NDH-1 shuttles electrons from NADH, via FMN and iron-sulfur (Fe-S) centers, to quinones in the respiratory chain. The immediate electron acceptor for the enzyme in this species is believed to be ubiquinone. Couples the redox reaction to proton translocation (for every two electrons transferred, four hydrogen ions are translocated across the cytoplasmic membrane), and thus conserves the redox energy in a proton gradient. This is NADH-quinone oxidoreductase subunit A from Pectobacterium carotovorum subsp. carotovorum (Erwinia carotovora subsp. carotovora).